The primary structure comprises 846 residues: MYVFVDRLSDSVSIPFVSKRAYRKRVNLDDDEDDFVDDPSPTEQKTKAEKKMERMGYKAGEGLGKNKQGIQEPIAISFREGKAGLGHEQWDDSTENKTVEETVIWMTNIDEGIRREICDKLIKDDQWMVVRKEKKVIDDETKFCSEKKLKDMLEAKNVFDSMSEKDIREARTRANPYETIGSAFFLNRSAMKTANMDKIYDWILSRENTGNNSFLLKNPLQEGTTAENVDRHEDLFYFADVCAGPGGFSEYMLWRKAFYNAKGFGFTLAGKDDFKLQKFTASSAYFFETFYGTKKNGDVMDPENIDSLEKLISEGTDGQGVHLMMADGAFSVQGQENIQEILSKRLYLCQLLVSLCIVREGGNFLCNLFDIFTPFSVGLIYLMRVCYDSISLHKPHTSRPANSERFVVCKGLRIECARVVKEYLKRVNRKLDELKNKNSKDDVMELMPLDVIKSDEQFMKEIIEHNEVLAHRQTVYLQKYKSFAKNQGQFDKDQGNLRDECLKYWQVPNKQRPRGGDRGSHLRRGRMGNKFPEFSISMLQSKIPLNIPYEEYRFVALGAASDPQLLIGTGDAVFIYRHGHFEQIDRDYARIPENTILLVDCAEEVKTDGSKIRISSDPHMIRIVDAAVLYGDNVSQLPYEARMKAAQKFALALKLTKKTIQIGWGFRAKDITPHQVCCAQTYSLKELDEFQSNLIELKQRGEVIVLFKEGDRQFKTQSLRLTRIIKQDWQMGWSKSQQVPYVHSPLHQKEGSILEDQWKKREIHSSFWDSVILTNKDKQKMTEMMQHGHNAVPSTIWSWKPCMRTEYGPYKIMNHPEAFDGKPTISAIKSQIAETDLSTQPSNYFY.

A disordered region spans residues 30-50 (DDEDDFVDDPSPTEQKTKAEK). The G-patch domain occupies 44 to 90 (QKTKAEKKMERMGYKAGEGLGKNKQGIQEPIAISFREGKAGLGHEQW). The RrmJ-type SAM-dependent 2'-O-MTase domain maps to 184 to 413 (FFLNRSAMKT…ERFVVCKGLR (230 aa)).

This Caenorhabditis briggsae protein is Inactive cap-specific mRNA (nucleoside-2'-O-)-methyltransferase 1B.